The sequence spans 707 residues: F-box/WD repeat-containing protein 7 (707 aa).

The segment at 1 to 151 (MNQELLSVGS…SVTNSSSIVD (151 aa)) is disordered. A Phosphoserine; by ATM modification is found at Ser-26. A compositionally biased stretch (low complexity) spans 57-68 (GEVVGVEPRPGG). A compositionally biased stretch (polar residues) spans 69–84 (QNDSQQGQLEENNNRF). Residues 87-129 (VDEDSSGNQEEQEEDEEHAGEQDEEDEEEEEMDQESDDFDQSD) show a composition bias toward acidic residues. Residues 130–139 (DSSREDEHTH) are compositionally biased toward basic and acidic residues. Residue Thr-205 is modified to Phosphothreonine. Phosphoserine; by SGK1 is present on Ser-227. The F-box domain occupies 278 to 324 (RDFISLLPKELALYVLSFLEPKDLLQAAQTCRYWRILAEDNLLWREK). WD repeat units follow at residues 378–418 (GHDD…RTLV), 420–456 (HTGG…CIHT), 459–498 (GHTS…HVLM), 500–536 (HVAA…CLHT), 539–578 (GHTN…HTLT), 580–618 (HQSL…QTLQ), and 622–659 (KHQS…FIRN).

Homodimer; homodimerization plays a role in substrate binding and/or ubiquitination and degradation. Component of the SCF(FBXW7) complex consisting of CUL1, RBX1, SKP1 and FBXW7. Interacts (via F-box domain) with SKP1. Interacts (via F-box domain) with pseudophosphatase STYX; the interaction is direct and prevents FBXW7 interaction with SKP1. Interacts with cyclin-E (CCNE1 or CCNE2). Interacts with PSEN1. Forms a trimeric complex with NOTCH1 and SGK1. Interacts with NOTCH1 intracellular domain/NICD and NOTCH4 intracellular domain/NICD. Interacts with NOTCH2 intracellular domain (N2ICD). Interacts with MYC (when phosphorylated). Interacts with USP28, counteracting ubiquitination of MYC. Interacts with JUN. Found in a complex with JUN and PRR7. Interacts with JUN and PRR7; the interaction inhibits ubiquitination-mediated JUN degradation, promoting its phosphorylation and transcriptional activity. Interacts (when phosphorylated at Thr-205) with PIN1, disrupting FBXW7 dimerization and promoting FBXW7 autoubiquitination and degradation. Interacts with UBE2QL1. Interacts with FAM83D; promotes FBXW7 degradation. Interacts with MYCN; FBXW7 competes with AURKA for binding to unphosphorylated MYCN but not for binding to phosphorylated MYCN. Interacts with STOML1. Interacts with NFE2L1. Interacts with USP36, counteracting ubiquitination of MYC. Interacts with NR1D1. Interacts with RICTOR; mediates RICTOR ubiquitination and degradation. Interacts with USP38, counteracting ubiquitination of MYC. In terms of assembly, (Microbial infection) Interacts (via WD repeats) with SV40 large T antigen (via CPD region). Phosphorylation at Thr-205 promotes interaction with PIN1, leading to disrupt FBXW7 dimerization and promoting FBXW7 autoubiquitination and degradation. Phosphorylated by ATM at Ser-26 in response to DNA damage, promoting recruitment to DNA damage sites and 'Lys-63'-linked ubiquitination of phosphorylated XRCC4. In terms of processing, ubiquitinated: autoubiquitinates following phosphorylation at Thr-205 and subsequent interaction with PIN1. Ubiquitination leads to its proteasomal degradation. In terms of tissue distribution, widely expressed. As to expression, expressed in brain.

The protein resides in the nucleus. It is found in the nucleoplasm. Its subcellular location is the chromosome. It localises to the cytoplasm. The protein localises to the nucleolus. Its pathway is protein modification; protein ubiquitination. In terms of biological role, substrate recognition component of a SCF (SKP1-CUL1-F-box protein) E3 ubiquitin-protein ligase complex which mediates the ubiquitination and subsequent proteasomal degradation of target proteins. Recognizes and binds phosphorylated sites/phosphodegrons within target proteins and thereafter brings them to the SCF complex for ubiquitination. Identified substrates include cyclin-E (CCNE1 or CCNE2), DISC1, JUN, MYC, NOTCH1 released notch intracellular domain (NICD), NFE2L1, NOTCH2, MCL1, MLST8, RICTOR, and probably PSEN1. Acts as a negative regulator of JNK signaling by binding to phosphorylated JUN and promoting its ubiquitination and subsequent degradation. Involved in bone homeostasis and negative regulation of osteoclast differentiation. Regulates the amplitude of the cyclic expression of hepatic core clock genes and genes involved in lipid and glucose metabolism via ubiquitination and proteasomal degradation of their transcriptional repressor NR1D1; CDK1-dependent phosphorylation of NR1D1 is necessary for SCF(FBXW7)-mediated ubiquitination. Also able to promote 'Lys-63'-linked ubiquitination in response to DNA damage. The SCF(FBXW7) complex facilitates double-strand break repair following phosphorylation by ATM: phosphorylation promotes localization to sites of double-strand breaks and 'Lys-63'-linked ubiquitination of phosphorylated XRCC4, enhancing DNA non-homologous end joining. The sequence is that of F-box/WD repeat-containing protein 7 from Homo sapiens (Human).